Reading from the N-terminus, the 295-residue chain is uncharacterized protein (295 aa).

The ABC transporter domain occupies 2 to 226; it reads LSIESLCKSY…QQTNVFTLSV (225 aa). An ATP-binding site is contributed by 34–41; that stretch reads GPNGAGKT.

It belongs to the ABC transporter superfamily.

This is an uncharacterized protein from Bacillus subtilis (strain 168).